A 304-amino-acid chain; its full sequence is tRNA pseudouridine synthase B (304 aa).

Residue Asp47 is the Nucleophile of the active site. The tract at residues Thr85–Asp105 is disordered.

It belongs to the pseudouridine synthase TruB family. Type 1 subfamily.

It catalyses the reaction uridine(55) in tRNA = pseudouridine(55) in tRNA. Its function is as follows. Responsible for synthesis of pseudouridine from uracil-55 in the psi GC loop of transfer RNAs. The chain is tRNA pseudouridine synthase B from Dinoroseobacter shibae (strain DSM 16493 / NCIMB 14021 / DFL 12).